The sequence spans 152 residues: uncharacterized protein (152 aa).

The protein resides in the mitochondrion. This is an uncharacterized protein from Arabidopsis thaliana (Mouse-ear cress).